The following is a 363-amino-acid chain: Probable auxin efflux carrier component 5a (363 aa).

The next 10 membrane-spanning stretches (helical) occupy residues 7 to 27 (VYKV…GYGS), 39 to 59 (CDAV…FEFT), 72 to 92 (VAAD…WARF), 103 to 123 (SITS…VPMA), 134 to 154 (LVVQ…LFVL), 222 to 242 (FVGI…PSAF), 246 to 266 (VLIM…LFMA), 281 to 301 (LGLV…SIAV), 307 to 327 (VLRV…FIFA), and 342 to 362 (IFGM…LELI).

The protein belongs to the auxin efflux carrier (TC 2.A.69.1) family. Expressed in leaves, shoot apex and panicles. Expressed in roots, stem bases, stems, leaves and young panicles.

Its subcellular location is the membrane. May act as a component of the auxin efflux carrier. The sequence is that of Probable auxin efflux carrier component 5a from Oryza sativa subsp. japonica (Rice).